The primary structure comprises 409 residues: SPI-1 type 3 secretion system translocon protein SctB (409 aa).

Residues 119-140 (ISGMSSSAVALLAAANTLMLTL) form a helical membrane-spanning segment. Residues 350-368 (ERSEQQISQVNNRVASTAS) show a composition bias toward polar residues. The segment at 350–378 (ERSEQQISQVNNRVASTASDEARESSRKS) is disordered.

The protein belongs to the SctB/SipC family. In terms of assembly, the core secretion machinery of the T3SS is composed of approximately 20 different proteins, including cytoplasmic components, a base, an export apparatus and a needle. This subunit is involved in the formation of a pore, called the translocon, in host membrane.

It is found in the secreted. It localises to the host membrane. Functionally, component of the type III secretion system 1 (SPI-1 T3SS), also called injectisome, which is used to inject bacterial effector proteins into eukaryotic host cells. SipB/SctE1 and SipC/SctB1 are inserted into the host membrane where they form a pore and allow the translocation of effector proteins into the cytosol of target cells. This is SPI-1 type 3 secretion system translocon protein SctB from Salmonella typhi.